Here is a 269-residue protein sequence, read N- to C-terminus: Tryptophan synthase alpha chain (269 aa).

Catalysis depends on proton acceptor residues Glu49 and Asp60.

The protein belongs to the TrpA family. In terms of assembly, tetramer of two alpha and two beta chains.

It carries out the reaction (1S,2R)-1-C-(indol-3-yl)glycerol 3-phosphate + L-serine = D-glyceraldehyde 3-phosphate + L-tryptophan + H2O. Its pathway is amino-acid biosynthesis; L-tryptophan biosynthesis; L-tryptophan from chorismate: step 5/5. In terms of biological role, the alpha subunit is responsible for the aldol cleavage of indoleglycerol phosphate to indole and glyceraldehyde 3-phosphate. The polypeptide is Tryptophan synthase alpha chain (Delftia acidovorans (strain DSM 14801 / SPH-1)).